The primary structure comprises 416 residues: Gamma-glutamyl phosphate reductase (416 aa).

It belongs to the gamma-glutamyl phosphate reductase family.

The protein localises to the cytoplasm. It catalyses the reaction L-glutamate 5-semialdehyde + phosphate + NADP(+) = L-glutamyl 5-phosphate + NADPH + H(+). The protein operates within amino-acid biosynthesis; L-proline biosynthesis; L-glutamate 5-semialdehyde from L-glutamate: step 2/2. Functionally, catalyzes the NADPH-dependent reduction of L-glutamate 5-phosphate into L-glutamate 5-semialdehyde and phosphate. The product spontaneously undergoes cyclization to form 1-pyrroline-5-carboxylate. The sequence is that of Gamma-glutamyl phosphate reductase from Vibrio atlanticus (strain LGP32) (Vibrio splendidus (strain Mel32)).